A 281-amino-acid chain; its full sequence is 2-dehydro-3-deoxyphosphooctonate aldolase (281 aa).

Belongs to the KdsA family.

It is found in the cytoplasm. The enzyme catalyses D-arabinose 5-phosphate + phosphoenolpyruvate + H2O = 3-deoxy-alpha-D-manno-2-octulosonate-8-phosphate + phosphate. The protein operates within carbohydrate biosynthesis; 3-deoxy-D-manno-octulosonate biosynthesis; 3-deoxy-D-manno-octulosonate from D-ribulose 5-phosphate: step 2/3. It participates in bacterial outer membrane biogenesis; lipopolysaccharide biosynthesis. In Marinobacter nauticus (strain ATCC 700491 / DSM 11845 / VT8) (Marinobacter aquaeolei), this protein is 2-dehydro-3-deoxyphosphooctonate aldolase.